The sequence spans 404 residues: Cysteine desulfurase IscS (404 aa).

Residues 75–76 (AT), N155, Q183, and 203–205 (SAH) contribute to the pyridoxal 5'-phosphate site. K206 is subject to N6-(pyridoxal phosphate)lysine. T243 lines the pyridoxal 5'-phosphate pocket. Catalysis depends on C328, which acts as the Cysteine persulfide intermediate. A [2Fe-2S] cluster-binding site is contributed by C328.

Belongs to the class-V pyridoxal-phosphate-dependent aminotransferase family. NifS/IscS subfamily. In terms of assembly, homodimer. Forms a heterotetramer with IscU, interacts with other sulfur acceptors. The cofactor is pyridoxal 5'-phosphate.

The protein localises to the cytoplasm. The catalysed reaction is (sulfur carrier)-H + L-cysteine = (sulfur carrier)-SH + L-alanine. The protein operates within cofactor biosynthesis; iron-sulfur cluster biosynthesis. Functionally, master enzyme that delivers sulfur to a number of partners involved in Fe-S cluster assembly, tRNA modification or cofactor biosynthesis. Catalyzes the removal of elemental sulfur atoms from cysteine to produce alanine. Functions as a sulfur delivery protein for Fe-S cluster synthesis onto IscU, an Fe-S scaffold assembly protein, as well as other S acceptor proteins. This is Cysteine desulfurase IscS from Buchnera aphidicola subsp. Acyrthosiphon pisum (strain 5A).